The sequence spans 110 residues: Phosphoribosyl-ATP pyrophosphatase (110 aa).

The protein belongs to the PRA-PH family.

It is found in the cytoplasm. It carries out the reaction 1-(5-phospho-beta-D-ribosyl)-ATP + H2O = 1-(5-phospho-beta-D-ribosyl)-5'-AMP + diphosphate + H(+). It participates in amino-acid biosynthesis; L-histidine biosynthesis; L-histidine from 5-phospho-alpha-D-ribose 1-diphosphate: step 2/9. In Lacticaseibacillus casei (strain BL23) (Lactobacillus casei), this protein is Phosphoribosyl-ATP pyrophosphatase.